Reading from the N-terminus, the 382-residue chain is Anhydro-N-acetylmuramic acid kinase (382 aa).

Gly22–Asp29 is an ATP binding site.

This sequence belongs to the anhydro-N-acetylmuramic acid kinase family.

The catalysed reaction is 1,6-anhydro-N-acetyl-beta-muramate + ATP + H2O = N-acetyl-D-muramate 6-phosphate + ADP + H(+). It participates in amino-sugar metabolism; 1,6-anhydro-N-acetylmuramate degradation. Its pathway is cell wall biogenesis; peptidoglycan recycling. In terms of biological role, catalyzes the specific phosphorylation of 1,6-anhydro-N-acetylmuramic acid (anhMurNAc) with the simultaneous cleavage of the 1,6-anhydro ring, generating MurNAc-6-P. Is required for the utilization of anhMurNAc either imported from the medium or derived from its own cell wall murein, and thus plays a role in cell wall recycling. The chain is Anhydro-N-acetylmuramic acid kinase from Burkholderia ambifaria (strain ATCC BAA-244 / DSM 16087 / CCUG 44356 / LMG 19182 / AMMD) (Burkholderia cepacia (strain AMMD)).